The primary structure comprises 239 residues: tRNA (guanine-N(7)-)-methyltransferase (239 aa).

Glutamate 69, glutamate 94, aspartate 121, and aspartate 144 together coordinate S-adenosyl-L-methionine. Aspartate 144 is a catalytic residue. Substrate is bound by residues lysine 148, aspartate 180, and 217–220; that span reads TKFE.

The protein belongs to the class I-like SAM-binding methyltransferase superfamily. TrmB family. In terms of assembly, monomer.

The catalysed reaction is guanosine(46) in tRNA + S-adenosyl-L-methionine = N(7)-methylguanosine(46) in tRNA + S-adenosyl-L-homocysteine. Its pathway is tRNA modification; N(7)-methylguanine-tRNA biosynthesis. Its function is as follows. Catalyzes the formation of N(7)-methylguanine at position 46 (m7G46) in tRNA. The polypeptide is tRNA (guanine-N(7)-)-methyltransferase (Buchnera aphidicola subsp. Acyrthosiphon pisum (strain 5A)).